A 355-amino-acid chain; its full sequence is Probable dual-specificity RNA methyltransferase RlmN (355 aa).

The Proton acceptor role is filled by Glu92. A Radical SAM core domain is found at 98–330 (FHYGLSVCVT…TELGINCGVR (233 aa)). Cys105 and Cys341 are disulfide-bonded. Positions 112, 116, and 119 each coordinate [4Fe-4S] cluster. Residues 164-165 (GE), Ser196, 219-221 (SLH), and Asn297 contribute to the S-adenosyl-L-methionine site. Residue Cys341 is the S-methylcysteine intermediate of the active site.

The protein belongs to the radical SAM superfamily. RlmN family. [4Fe-4S] cluster is required as a cofactor.

It localises to the cytoplasm. The catalysed reaction is adenosine(2503) in 23S rRNA + 2 reduced [2Fe-2S]-[ferredoxin] + 2 S-adenosyl-L-methionine = 2-methyladenosine(2503) in 23S rRNA + 5'-deoxyadenosine + L-methionine + 2 oxidized [2Fe-2S]-[ferredoxin] + S-adenosyl-L-homocysteine. It catalyses the reaction adenosine(37) in tRNA + 2 reduced [2Fe-2S]-[ferredoxin] + 2 S-adenosyl-L-methionine = 2-methyladenosine(37) in tRNA + 5'-deoxyadenosine + L-methionine + 2 oxidized [2Fe-2S]-[ferredoxin] + S-adenosyl-L-homocysteine. Functionally, specifically methylates position 2 of adenine 2503 in 23S rRNA and position 2 of adenine 37 in tRNAs. This is Probable dual-specificity RNA methyltransferase RlmN from Oceanobacillus iheyensis (strain DSM 14371 / CIP 107618 / JCM 11309 / KCTC 3954 / HTE831).